We begin with the raw amino-acid sequence, 991 residues long: UvrABC system protein A (991 aa).

Position 48–55 (48–55 (GLSGSGKS)) interacts with ATP. ABC transporter domains lie at 345 to 624 (WAKS…PKSL) and 644 to 972 (NHRR…KFLE). Residue 676 to 683 (GVSGGGKS) participates in ATP binding. The C4-type zinc-finger motif lies at 775–801 (CEACQGDGVIKIEMHFLPDVYVTCDVC).

The protein belongs to the ABC transporter superfamily. UvrA family. As to quaternary structure, forms a heterotetramer with UvrB during the search for lesions.

It is found in the cytoplasm. The UvrABC repair system catalyzes the recognition and processing of DNA lesions. UvrA is an ATPase and a DNA-binding protein. A damage recognition complex composed of 2 UvrA and 2 UvrB subunits scans DNA for abnormalities. When the presence of a lesion has been verified by UvrB, the UvrA molecules dissociate. The protein is UvrABC system protein A of Bradyrhizobium diazoefficiens (strain JCM 10833 / BCRC 13528 / IAM 13628 / NBRC 14792 / USDA 110).